The sequence spans 445 residues: Tubulin beta chain (445 aa).

GTP is bound by residues Gln11, Glu69, Ser138, Gly142, Thr143, Gly144, Asn205, and Asn227. Residue Glu69 participates in Mg(2+) binding.

This sequence belongs to the tubulin family. As to quaternary structure, dimer of alpha and beta chains. A typical microtubule is a hollow water-filled tube with an outer diameter of 25 nm and an inner diameter of 15 nM. Alpha-beta heterodimers associate head-to-tail to form protofilaments running lengthwise along the microtubule wall with the beta-tubulin subunit facing the microtubule plus end conferring a structural polarity. Microtubules usually have 13 protofilaments but different protofilament numbers can be found in some organisms and specialized cells. It depends on Mg(2+) as a cofactor.

The protein localises to the cytoplasm. It is found in the cytoskeleton. Functionally, tubulin is the major constituent of microtubules, a cylinder consisting of laterally associated linear protofilaments composed of alpha- and beta-tubulin heterodimers. Microtubules grow by the addition of GTP-tubulin dimers to the microtubule end, where a stabilizing cap forms. Below the cap, tubulin dimers are in GDP-bound state, owing to GTPase activity of alpha-tubulin. In Ajellomyces capsulatus (Darling's disease fungus), this protein is Tubulin beta chain (TUB2).